The sequence spans 284 residues: 2-dehydro-3-deoxyphosphooctonate aldolase (284 aa).

Belongs to the KdsA family.

It localises to the cytoplasm. The catalysed reaction is D-arabinose 5-phosphate + phosphoenolpyruvate + H2O = 3-deoxy-alpha-D-manno-2-octulosonate-8-phosphate + phosphate. The protein operates within carbohydrate biosynthesis; 3-deoxy-D-manno-octulosonate biosynthesis; 3-deoxy-D-manno-octulosonate from D-ribulose 5-phosphate: step 2/3. Its pathway is bacterial outer membrane biogenesis; lipopolysaccharide biosynthesis. This is 2-dehydro-3-deoxyphosphooctonate aldolase from Citrobacter koseri (strain ATCC BAA-895 / CDC 4225-83 / SGSC4696).